The following is a 388-amino-acid chain: Beta-1,4-galactosyltransferase 5 (388 aa).

Residues 1-14 lie on the Cytoplasmic side of the membrane; the sequence is MRARRGLLRLPRRS. The chain crosses the membrane as a helical; Signal-anchor for type II membrane protein span at residues 15 to 35; sequence LLAALFFFSLSSSLLYFVYVA. Residues 36–388 are Lumenal-facing; the sequence is PGIVNTYLFM…TPELAQVNEY (353 aa). N-linked (GlcNAc...) asparagine glycosylation is found at N77, N81, N90, N111, and N128. The cysteines at positions 114 and 158 are disulfide-linked. Residues 169-173, 208-210, 235-236, Y264, and W296 contribute to the UDP-alpha-D-galactose site; these read PFRNR, FNR, and VD. Cysteines 229 and 248 form a disulfide. D236 lines the Mn(2+) pocket. 298-301 is a binding site for N-acetyl-D-glucosamine; that stretch reads GEDD. A Mn(2+)-binding site is contributed by H329. 329–330 is a UDP-alpha-D-galactose binding site; that stretch reads HH. R340 contributes to the N-acetyl-D-glucosamine binding site. Residues N364 and N373 are each glycosylated (N-linked (GlcNAc...) asparagine).

Belongs to the glycosyltransferase 7 family. Mn(2+) serves as cofactor. As to expression, ubiquitously expressed.

The protein resides in the golgi apparatus. Its subcellular location is the golgi stack membrane. It carries out the reaction a beta-D-glucosyl-(1&lt;-&gt;1')-N-acylsphing-4-enine + UDP-alpha-D-galactose = a beta-D-Gal-(1-&gt;4)-beta-D-Glc-(1&lt;-&gt;1)-Cer(d18:1(4E)) + UDP + H(+). The protein operates within protein modification; protein glycosylation. Its pathway is sphingolipid metabolism. Functionally, catalyzes the synthesis of lactosylceramide (LacCer) via the transfer of galactose from UDP-galactose to glucosylceramide (GlcCer). LacCer is the starting point in the biosynthesis of all gangliosides (membrane-bound glycosphingolipids) which play pivotal roles in the CNS including neuronal maturation and axonal and myelin formation. Plays a role in the glycosylation of BMPR1A and regulation of its protein stability. Essential for extraembryonic development during early embryogenesis. This Homo sapiens (Human) protein is Beta-1,4-galactosyltransferase 5.